The primary structure comprises 622 residues: Kinesin-like protein KIFC1 (622 aa).

Residues 1–88 (MKEALEPAKK…KRPGKRPDWD (88 aa)) are disordered. The span at 32–41 (SSLSQPQGPT) shows a compositional bias: polar residues. The stretch at 95–264 (DLTEELKCYR…QELKGNIRVF (170 aa)) forms a coiled coil. The 353-residue stretch at 260-612 (NIRVFCRVRP…LRFASKVNQC (353 aa)) folds into the Kinesin motor domain. The segment at 279 to 323 (PGFLLFPHGPAGPSDPPTRLSLSRSDDRRSTLTRAPAPTTRHDFS) is disordered. A Phosphothreonine modification is found at T309. 360–367 (GQTGSGKT) is a binding site for ATP.

It belongs to the TRAFAC class myosin-kinesin ATPase superfamily. Kinesin family. NCD subfamily. As to quaternary structure, binds NUBP1 and NUBP2. Interacts with PPP1R42.

It localises to the nucleus. It is found in the cytoplasm. The protein resides in the cytoskeleton. The protein localises to the microtubule organizing center. Its subcellular location is the centrosome. It localises to the spindle. It is found in the early endosome. In terms of biological role, minus end-directed microtubule-dependent motor required for bipolar spindle formation. May contribute to movement of early endocytic vesicles. Regulates cilium formation and structure. The polypeptide is Kinesin-like protein KIFC1 (Cricetulus griseus (Chinese hamster)).